The chain runs to 118 residues: Cell division protein SepF (118 aa).

Positions M1–G12 are important for localization in a ring-like structure at midcell.

In terms of assembly, homodimer. Does not oligomerize. Interacts with FtsZ2.

The protein resides in the cytoplasm. Its function is as follows. Involved in cell division. Probably acts as a membrane anchor for FstZ2, tethering its filaments to the division site. May be involved in septum closure. The chain is Cell division protein SepF from Haloferax volcanii (strain ATCC 29605 / DSM 3757 / JCM 8879 / NBRC 14742 / NCIMB 2012 / VKM B-1768 / DS2) (Halobacterium volcanii).